Consider the following 152-residue polypeptide: Acyl carrier protein, mitochondrial (152 aa).

The 76-residue stretch at Lys73–Glu148 folds into the Carrier domain. Ser108 bears the O-(pantetheine 4'-phosphoryl)serine mark.

It belongs to the acyl carrier protein (ACP) family. As to quaternary structure, complex I is composed of about 45 different subunits.

It is found in the mitochondrion. Functionally, carrier of the growing fatty acid chain in fatty acid biosynthesis. Accessory and non-catalytic subunit of the mitochondrial membrane respiratory chain NADH dehydrogenase (Complex I), which functions in the transfer of electrons from NADH to the respiratory chain. The sequence is that of Acyl carrier protein, mitochondrial from Drosophila melanogaster (Fruit fly).